Here is an 832-residue protein sequence, read N- to C-terminus: Sodium/hydrogen exchanger 3 (832 aa).

The first 29 residues, 1 to 29 (MGRNRSGCVARCVSLTALVLLLCCPVVRS), serve as a signal peptide directing secretion. Topologically, residues 30–66 (SEAETDPDSHTEHGDSHGGSREGNDTGFQIVTFRWEH) are extracellular. Residues 31–51 (EAETDPDSHTEHGDSHGGSRE) are disordered. The segment covering 36–51 (PDSHTEHGDSHGGSRE) has biased composition (basic and acidic residues). A helical membrane pass occupies residues 67 to 89 (VQTPYVIALWILVASLGKIVFHL). Topologically, residues 90–97 (SEKVTSVV) are cytoplasmic. Residues 98–117 (PESALLIVLGLILGGIVWAA) traverse the membrane as a helical segment. Residues 118-126 (DHSASFTLT) lie on the Extracellular side of the membrane. A helical transmembrane segment spans residues 127 to 144 (PTVFFFYLLPPIVLDAGY). Over 145–147 (FMP) the chain is Cytoplasmic. A helical membrane pass occupies residues 148 to 183 (NRHFFGNLGTILTYAVIGTVWNAATTGLSLYGVFLL). Residues Gly-153, Gly-156, and Thr-157 each coordinate a 1,2-diacyl-sn-glycero-3-phospho-(1D-myo-inositol). Over 184–196 (GLMGDLKAGLLEF) the chain is Extracellular. A helical transmembrane segment spans residues 197-218 (LLFGSLIAAVDPVAVLAVFEEV). Residues 219–220 (HV) lie on the Cytoplasmic side of the membrane. A helical membrane pass occupies residues 221–252 (NEVLFIIVFGESLLNDAVTVVLYNVFNSFVEV). The Extracellular segment spans residues 253–259 (GAGNVQG). Residues 260-294 (LDYFKGIVSFFVVSLGGTAVGIIFAFILSLVTRFT) traverse the membrane as a helical segment. The Cytoplasmic segment spans residues 295-296 (KH). Residues 297 to 319 (VRVIEPGFVFVISYLSYLTADML) form a helical membrane-spanning segment. Residues 320–321 (SL) lie on the Extracellular side of the membrane. The helical transmembrane segment at 322-338 (SAILAITFCGICCQKYV) threads the bilayer. The Cytoplasmic portion of the chain corresponds to 339 to 345 (KANLCEQ). Residues 346–374 (SITTVRYAMKMLASGAETIIFMFLGISAV) form a helical membrane-spanning segment. The Extracellular portion of the chain corresponds to 375 to 382 (NPTIWTWN). The chain crosses the membrane as a helical span at residues 383 to 404 (TAFILLTLVFISVYRVIGVVIQ). Residues 405 to 417 (TWILNHYRVVQLE) are Cytoplasmic-facing. The helical transmembrane segment at 418-441 (IIDQVVMSYGGLRGAVAFALVVLL) threads the bilayer. The Extracellular portion of the chain corresponds to 442-448 (DSNYVGE). The chain crosses the membrane as a helical span at residues 449–482 (RRLFVSTTIIVVYFTVIFQGLTIKPLVKWLKVKR). The Cytoplasmic segment spans residues 483 to 832 (SQHKEPLLNE…PLSFLPESSM (350 aa)). The a 1,2-diacyl-sn-glycero-3-phospho-(1D-myo-inositol) site is built by Gln-512, Ile-513, and His-515. The disordered stretch occupies residues 740–760 (TPASNDADETGTGIDNPSFSN).

Belongs to the monovalent cation:proton antiporter 1 (CPA1) transporter (TC 2.A.36) family. Homodimer. In terms of tissue distribution, detected in early distal renal tubules in the kidney bundle zone, in proximal and late distal tubules in the kidney sinus zone, in absorptive epithelial cells of the intestine and in rectal epithelium (at protein level). Isoform 1 is expressed strongly in the gills, at intermediate levels in the kidney, spleen, rectum, spiral intestine and skin, and weakly in the brain, blood and rectal gland. Isoform 2 is expressed strongly in the kidney, rectum and spiral intestine, and weakly in muscles and the rectal gland.

Its subcellular location is the apical cell membrane. The protein localises to the cell membrane. The protein resides in the recycling endosome membrane. It localises to the early endosome membrane. It carries out the reaction Na(+)(in) + H(+)(out) = Na(+)(out) + H(+)(in). With respect to regulation, seems to switch between active and inactive modes in response to various stimuli. Activated directly or indirectly by membrane phosphatidylinositol (PIs). Regulated by a variety of auxiliary proteins, which facilitate the maturation, cell surface expression and function of the transporter. Inhibited specifically by the drug tenapanor. Plasma membrane Na(+)/H(+) antiporter. Exchanges intracellular H(+) ions for extracellular Na(+) in 1:1 stoichiometry, playing a key role in salt and fluid absorption and pH homeostasis. Major apical Na(+)/H(+) exchanger in kidney and intestine playing an important role in renal and intestine Na(+) absorption and blood pressure regulation. The sequence is that of Sodium/hydrogen exchanger 3 from Triakis scyllium (Banded houndshark).